Reading from the N-terminus, the 717-residue chain is Cleavage stimulation factor subunit 3 (717 aa).

At Ser-2 the chain carries N-acetylserine. HAT repeat units lie at residues 45–77 (QPID…AEIK), 79–110 (KNYD…YVRE), 117–152 (SYKE…FLKG), 163–196 (QRIT…YEEG), 221–261 (KEYE…WEKS), 271–303 (LITK…YLEQ), 319–352 (LFSD…YEES), 354–387 (MKYE…FARR), and 458–494 (NEDN…FESN). The segment at 683–704 (AVKRPNEDSDEDEEKGAVVPPV) is disordered. Ser-691 carries the phosphoserine modification.

Homodimer. The CSTF complex is composed of CSTF1 (50 kDa subunit), CSTF2 (64 kDa subunit) and CSTF3 (77 kDa subunit). CSTF3 directly interacts with CSTF1 and CSTF2. Interacts with FIP1L1.

It localises to the nucleus. Functionally, one of the multiple factors required for polyadenylation and 3'-end cleavage of mammalian pre-mRNAs. This chain is Cleavage stimulation factor subunit 3 (Cstf3), found in Mus musculus (Mouse).